Consider the following 282-residue polypeptide: Flagellin (282 aa).

Belongs to the bacterial flagellin family.

The protein resides in the secreted. Its subcellular location is the bacterial flagellum. Its function is as follows. Flagellin is the subunit protein which polymerizes to form the filaments of bacterial flagella. The flagellum is required to cause a persistent disease in a murine model of infection. The chain is Flagellin (fliC) from Brucella melitensis biotype 1 (strain ATCC 23456 / CCUG 17765 / NCTC 10094 / 16M).